Here is a 351-residue protein sequence, read N- to C-terminus: Nitronate monooxygenase (351 aa).

Residues leucine 21, asparagine 69, glutamine 176, glycine 181, glycine 218, and 237–240 each bind FMN; that span reads QMGT.

Belongs to the nitronate monooxygenase family. NMO class I subfamily. FMN serves as cofactor.

It carries out the reaction 3 propionate 3-nitronate + 3 O2 + H2O = 3 3-oxopropanoate + 2 nitrate + nitrite + H2O2 + 3 H(+). Functionally, nitronate monooxygenase that uses molecular oxygen to catalyze the oxidative denitrification of alkyl nitronates. The toxin propionate 3-nitronate (P3N) is the best substrate (and the presumed physiological substrate), but this enzyme is also active on other primary and secondary nitronates such as propyl-1-nitronate, ethylnitronate, pentyl-1-nitronate, butyl-1-nitronate and propyl-2-nitronate. Is likely involved in the degradation of P3N, that allows P.aeruginosa PAO1 to grow on 3-nitropropionate/P3N as the sole nitrogen source. Also functions in the detoxification of P3N, a metabolic poison produced by plants and fungi as a defense mechanism. Cannot oxidize nitroalkanes such as 3-nitropropionate, nitroethane, 1-nitropropane, 1-nitrobutane, 1-nitropentane, or 2-nitropropane. The chain is Nitronate monooxygenase from Pseudomonas aeruginosa (strain ATCC 15692 / DSM 22644 / CIP 104116 / JCM 14847 / LMG 12228 / 1C / PRS 101 / PAO1).